The chain runs to 130 residues: Single-stranded DNA-binding protein 1 (130 aa).

One can recognise an SSB domain in the interval 1–104 (MINNVVLIGR…VVAESFQILE (104 aa)). The disordered stretch occupies residues 108–130 (NTANTSSLADSMPDYGPEPDLPF).

Homotetramer.

The chain is Single-stranded DNA-binding protein 1 (ssb1) from Streptococcus pyogenes serotype M18 (strain MGAS8232).